A 215-amino-acid chain; its full sequence is Probable GTP-binding protein EngB (215 aa).

An EngB-type G domain is found at 26-200 (EGIEVAFAGR…RAKLDEWFAP (175 aa)). GTP-binding positions include 34 to 41 (GRSNAGKS), 61 to 65 (GRTQL), 79 to 82 (DLPG), 146 to 149 (TKAD), and 179 to 181 (FSS). Mg(2+) contacts are provided by serine 41 and threonine 63.

It belongs to the TRAFAC class TrmE-Era-EngA-EngB-Septin-like GTPase superfamily. EngB GTPase family. Mg(2+) is required as a cofactor.

Functionally, necessary for normal cell division and for the maintenance of normal septation. The sequence is that of Probable GTP-binding protein EngB from Aliivibrio fischeri (strain ATCC 700601 / ES114) (Vibrio fischeri).